The chain runs to 412 residues: Phosphoribosylamine--glycine ligase (412 aa).

Positions 108-309 (KSIMKKYGVP…LAQAIIDILA (202 aa)) constitute an ATP-grasp domain. 134–190 (LDEKGVPLVIKADGLAAGKGVTVAFDIETAKSALADIFSGSQGKVVIEEFLDGEEFS) contacts ATP. Residues Glu-279 and Asn-281 each coordinate Mg(2+).

This sequence belongs to the GARS family. Mg(2+) is required as a cofactor. Requires Mn(2+) as cofactor.

The catalysed reaction is 5-phospho-beta-D-ribosylamine + glycine + ATP = N(1)-(5-phospho-beta-D-ribosyl)glycinamide + ADP + phosphate + H(+). It participates in purine metabolism; IMP biosynthesis via de novo pathway; N(1)-(5-phospho-D-ribosyl)glycinamide from 5-phospho-alpha-D-ribose 1-diphosphate: step 2/2. In Lactococcus lactis subsp. lactis (strain IL1403) (Streptococcus lactis), this protein is Phosphoribosylamine--glycine ligase.